The sequence spans 293 residues: Acetylglutamate kinase (293 aa).

Substrate-binding positions include 66–67 (GG), Arg-88, and Asn-190.

This sequence belongs to the acetylglutamate kinase family. ArgB subfamily.

Its subcellular location is the cytoplasm. The enzyme catalyses N-acetyl-L-glutamate + ATP = N-acetyl-L-glutamyl 5-phosphate + ADP. It functions in the pathway amino-acid biosynthesis; L-arginine biosynthesis; N(2)-acetyl-L-ornithine from L-glutamate: step 2/4. Its function is as follows. Catalyzes the ATP-dependent phosphorylation of N-acetyl-L-glutamate. This is Acetylglutamate kinase from Thiobacillus denitrificans (strain ATCC 25259 / T1).